Reading from the N-terminus, the 309-residue chain is SERTA domain-containing protein 2 (309 aa).

Disordered regions lie at residues 1–30, 79–114, and 175–220; these read MLGK…GPSR, EGSL…CDLG, and PTST…MDSL. The segment covering 8 to 18 has biased composition (basic and acidic residues); that stretch reads RKFDEHEDGLE. Residues 33-80 form the SERTA domain; that stretch reads YTLQRQTIFNISLMKLYNHRPLTEPSLQKTVLINNMLRRIQEELKQEG. 2 stretches are compositionally biased toward low complexity: residues 89-99 and 175-189; these read SSQPSNSLSDS and PTST…AAPE. Positions 204 to 216 are enriched in basic and acidic residues; that stretch reads EGPEEGRTDDSRF. Positions 230–306 are required for transactivation activity; it reads TGFLTDLTLD…TELDHIMEVL (77 aa). A Nuclear export signal (NES) motif is present at residues 233–238; that stretch reads LTDLTL.

Interacts with XPO1; which mediates nuclear export. Interacts with TFDP1; modulates transactivation activity of TFDP1/E2F complexes. Polyubiquitinated, which promotes proteasomal degradation. As to expression, expressed in white and brown adipose tissue.

It localises to the nucleus. The protein localises to the cytoplasm. In terms of biological role, acts at E2F-responsive promoters as coregulator to integrate signals provided by PHD- and/or bromodomain-containing transcription factors. May act as coactivator as well as corepressor of E2F1-TFDP1 and E2F4-TFDP1 complexes on E2F consensus binding sites, which would activate or inhibit E2F-target genes expression. Modulates fat storage by down-regulating the expression of key genes involved in adipocyte lipolysis, thermogenesis and oxidative metabolism. In Mus musculus (Mouse), this protein is SERTA domain-containing protein 2 (Sertad2).